The chain runs to 181 residues: ATP-dependent protease subunit HslV (181 aa).

Residue Thr9 is part of the active site. The Na(+) site is built by Ser166, Cys169, and Thr172.

Belongs to the peptidase T1B family. HslV subfamily. In terms of assembly, a double ring-shaped homohexamer of HslV is capped on each side by a ring-shaped HslU homohexamer. The assembly of the HslU/HslV complex is dependent on binding of ATP.

The protein resides in the cytoplasm. The enzyme catalyses ATP-dependent cleavage of peptide bonds with broad specificity.. Allosterically activated by HslU binding. Protease subunit of a proteasome-like degradation complex believed to be a general protein degrading machinery. The polypeptide is ATP-dependent protease subunit HslV (Staphylococcus haemolyticus (strain JCSC1435)).